The primary structure comprises 436 residues: Cold sensitive U2 snRNA suppressor 1 (436 aa).

Positions 1 to 10 (MARTKSRKRS) are enriched in basic residues. Residues 1-22 (MARTKSRKRSGNNQNKNASVVN) form a disordered region. The span at 12–22 (NNQNKNASVVN) shows a compositional bias: low complexity. Phosphothreonine occurs at positions 104 and 112. The residue at position 114 (Ser114) is a Phosphoserine. Residues 374-436 (EFENSKEDTQ…SEKQLYTVLK (63 aa)) form a disordered region. Positions 389-408 (GRQDDKIDDEVEHKLDHFQE) are enriched in basic and acidic residues.

This sequence to mammalian SAP 145. Some, to C.elegans ZK632.11. In terms of assembly, belongs to the CWC complex (or CEF1-associated complex), a spliceosome sub-complex reminiscent of a late-stage spliceosome composed of the U2, U5 and U6 snRNAs and at least BUD13, BUD31, BRR2, CDC40, CEF1, CLF1, CUS1, CWC2, CWC15, CWC21, CWC22, CWC23, CWC24, CWC25, CWC27, ECM2, HSH155, IST3, ISY1, LEA1, MSL1, NTC20, PRP8, PRP9, PRP11, PRP19, PRP21, PRP22, PRP45, PRP46, SLU7, SMB1, SMD1, SMD2, SMD3, SMX2, SMX3, SNT309, SNU114, SPP2, SYF1, SYF2, RSE1 and YJU2. Interacts with RDS3.

Its subcellular location is the nucleus. Essential splicing protein required for U2 snRNP binding to pre-mRNA during spliceosome assembly. The sequence is that of Cold sensitive U2 snRNA suppressor 1 (CUS1) from Saccharomyces cerevisiae (strain ATCC 204508 / S288c) (Baker's yeast).